A 92-amino-acid polypeptide reads, in one-letter code: Elongation factor 1-beta (92 aa).

The protein belongs to the EF-1-beta/EF-1-delta family.

Functionally, promotes the exchange of GDP for GTP in EF-1-alpha/GDP, thus allowing the regeneration of EF-1-alpha/GTP that could then be used to form the ternary complex EF-1-alpha/GTP/AAtRNA. This chain is Elongation factor 1-beta, found in Pyrobaculum calidifontis (strain DSM 21063 / JCM 11548 / VA1).